We begin with the raw amino-acid sequence, 215 residues long: Pyrrolidone-carboxylate peptidase (215 aa).

Active-site residues include E78, C141, and H165.

The protein belongs to the peptidase C15 family. In terms of assembly, homotetramer.

The protein localises to the cytoplasm. It catalyses the reaction Release of an N-terminal pyroglutamyl group from a polypeptide, the second amino acid generally not being Pro.. In terms of biological role, removes 5-oxoproline from various penultimate amino acid residues except L-proline. In Streptococcus pyogenes serotype M12 (strain MGAS2096), this protein is Pyrrolidone-carboxylate peptidase.